A 260-amino-acid polypeptide reads, in one-letter code: Indole-3-glycerol phosphate synthase (260 aa).

It belongs to the TrpC family.

It catalyses the reaction 1-(2-carboxyphenylamino)-1-deoxy-D-ribulose 5-phosphate + H(+) = (1S,2R)-1-C-(indol-3-yl)glycerol 3-phosphate + CO2 + H2O. The protein operates within amino-acid biosynthesis; L-tryptophan biosynthesis; L-tryptophan from chorismate: step 4/5. The sequence is that of Indole-3-glycerol phosphate synthase from Bacteroides thetaiotaomicron (strain ATCC 29148 / DSM 2079 / JCM 5827 / CCUG 10774 / NCTC 10582 / VPI-5482 / E50).